Reading from the N-terminus, the 737-residue chain is Transcription activator MSS11 (737 aa).

The tract at residues 1–23 is disordered; it reads MDNTTNINTNERSSNTDFSSAPN. Residues 51–83 form the LisH domain; sequence SKQLLYAHIYNYLIKNNYWNSAAKFLSEADLPL. 4 disordered regions span residues 191-220, 268-347, 413-439, and 572-660; these read TQNS…TNRN, LQSP…PTNQ, GNQN…NANG, and KTNT…TKES. Over residues 207–220 the composition is skewed to polar residues; it reads DGSNFNLNDPTNRN. Positions 269 to 314 are enriched in low complexity; that stretch reads QSPAQPQQSSQQQIQQPQRQPQHQQQQQQQQQQQQQQQQQQQQQQQ. Polar residues-rich tracts occupy residues 330–347, 421–439, and 572–585; these read SENS…PTNQ, TRNN…NANG, and KTNT…STSV. Residues 590 to 643 are compositionally biased toward low complexity; that stretch reads NNNNNNNNNNNNNNNSNNSNNNNNNNNSNNTPTVSQPSSKRTSSSSTTPNITTT. The span at 646–655 shows a compositional bias: basic residues; it reads PKRKQRVGKT.

This sequence belongs to the MSS11 family. Interacts with FLO8, STE12 and TEC1.

It is found in the cytoplasm. It localises to the nucleus. Functionally, transcription factor that regulates pseudohyphal differentiation, invasive growth, floculation, adhesion and starch metabolism in response to nutrient availability. In Saccharomyces cerevisiae (strain YJM789) (Baker's yeast), this protein is Transcription activator MSS11 (MSS11).